Consider the following 122-residue polypeptide: Large ribosomal subunit protein uL14 (122 aa).

It belongs to the universal ribosomal protein uL14 family. In terms of assembly, part of the 50S ribosomal subunit. Forms a cluster with proteins L3 and L19. In the 70S ribosome, L14 and L19 interact and together make contacts with the 16S rRNA in bridges B5 and B8.

Binds to 23S rRNA. Forms part of two intersubunit bridges in the 70S ribosome. The protein is Large ribosomal subunit protein uL14 of Bacillus anthracis (strain A0248).